Consider the following 266-residue polypeptide: Type III pantothenate kinase (266 aa).

15–22 (EIGNSSTS) contributes to the ATP binding site. Substrate-binding positions include tyrosine 105 and 112-115 (GADR). Residue aspartate 114 is the Proton acceptor of the active site. K(+) is bound at residue aspartate 135. Threonine 138 lines the ATP pocket. Substrate is bound at residue threonine 191.

Belongs to the type III pantothenate kinase family. In terms of assembly, homodimer. Requires NH4(+) as cofactor. K(+) serves as cofactor.

Its subcellular location is the cytoplasm. It catalyses the reaction (R)-pantothenate + ATP = (R)-4'-phosphopantothenate + ADP + H(+). It functions in the pathway cofactor biosynthesis; coenzyme A biosynthesis; CoA from (R)-pantothenate: step 1/5. Catalyzes the phosphorylation of pantothenate (Pan), the first step in CoA biosynthesis. This is Type III pantothenate kinase from Chlorobium chlorochromatii (strain CaD3).